The chain runs to 204 residues: MIAKLTGILDDTGPDWAVIDVNGVGYLVHCSAKTLTHLGLRGDKVVVHTEMQVSETDQRLIGFTSAGERAWFRLLTAVQGVGSKVALAILSALSVEELQRACAHGDSAMVARANGVGPKLASRIVNELKDKAGGLAGYASPVGPGGEAFVAPPGNASADAVSALQNLGFKPAVASSAVAAAVKELGEDAGLNDLVRVALKRAAG.

The segment at 1 to 64 is domain I; that stretch reads MIAKLTGILD…ETDQRLIGFT (64 aa). Residues 65-143 form a domain II region; the sequence is SAGERAWFRL…GLAGYASPVG (79 aa). The interval 144 to 154 is flexible linker; it reads PGGEAFVAPPG. Residues 154–204 are domain III; that stretch reads GNASADAVSALQNLGFKPAVASSAVAAAVKELGEDAGLNDLVRVALKRAAG.

This sequence belongs to the RuvA family. Homotetramer. Forms an RuvA(8)-RuvB(12)-Holliday junction (HJ) complex. HJ DNA is sandwiched between 2 RuvA tetramers; dsDNA enters through RuvA and exits via RuvB. An RuvB hexamer assembles on each DNA strand where it exits the tetramer. Each RuvB hexamer is contacted by two RuvA subunits (via domain III) on 2 adjacent RuvB subunits; this complex drives branch migration. In the full resolvosome a probable DNA-RuvA(4)-RuvB(12)-RuvC(2) complex forms which resolves the HJ.

The protein localises to the cytoplasm. In terms of biological role, the RuvA-RuvB-RuvC complex processes Holliday junction (HJ) DNA during genetic recombination and DNA repair, while the RuvA-RuvB complex plays an important role in the rescue of blocked DNA replication forks via replication fork reversal (RFR). RuvA specifically binds to HJ cruciform DNA, conferring on it an open structure. The RuvB hexamer acts as an ATP-dependent pump, pulling dsDNA into and through the RuvAB complex. HJ branch migration allows RuvC to scan DNA until it finds its consensus sequence, where it cleaves and resolves the cruciform DNA. This is Holliday junction branch migration complex subunit RuvA from Novosphingobium aromaticivorans (strain ATCC 700278 / DSM 12444 / CCUG 56034 / CIP 105152 / NBRC 16084 / F199).